Reading from the N-terminus, the 975-residue chain is E3 ubiquitin-protein ligase BRE1A (975 aa).

Positions 1 to 37 (MSGIGSKRAAGEPGTSVPPEKKTAVEDSGTTVETIKL) are disordered. An N6-acetyllysine modification is found at Lys21. Ser41 bears the Phosphoserine mark. Residues 43–90 (TEELDIRTLQTKNRKLAEMLDQRQAIEDELREHIEKLERRQATDDASL) are a coiled coil. The segment at 125–155 (KALVVPEPEPDSDSNQERKDDRERGEGQEPA) is disordered. Phosphoserine occurs at positions 136 and 138. Basic and acidic residues predominate over residues 139 to 151 (NQERKDDRERGEG). Coiled-coil stretches lie at residues 168-375 (EEME…EEVV) and 429-898 (SLHK…TTKK). Residues Lys348 and Lys510 each carry the N6-acetyllysine modification. Residues 507-622 (DLNKTRLRSG…GKHDDGRKKE (116 aa)) are disordered. Ser522 carries the post-translational modification Phosphoserine. Positions 527–540 (EDPKDEPAELKQDS) are enriched in basic and acidic residues. Positions 543-552 (LATQSAASKA) are enriched in polar residues. The span at 558–622 (NEIKSKRDEE…GKHDDGRKKE (65 aa)) shows a compositional bias: basic and acidic residues. Ser562 bears the Phosphoserine mark. The segment at 922–961 (CPCCNMRKKDAVLTKCFHVFCFECVKTRYDTRQRKCPKCN) adopts an RING-type zinc-finger fold.

Belongs to the BRE1 family. Component of the RNF20/40 complex (also known as BRE1 complex) probably composed of 2 copies of RNF20/BRE1A and 2 copies of RNF40/BRE1B. Interacts with UBE2E1/UBCH6. Interacts with p53/TP53 and WAC. Interacts with PAF1; the interaction mediates the association of the PAF1 and RNF20/40 complexes which is a prerequsite for recruitment of UBE2A/B. Interacts with PA2G4. Interacts with FBXL19.

The protein localises to the nucleus. The catalysed reaction is S-ubiquitinyl-[E2 ubiquitin-conjugating enzyme]-L-cysteine + [acceptor protein]-L-lysine = [E2 ubiquitin-conjugating enzyme]-L-cysteine + N(6)-ubiquitinyl-[acceptor protein]-L-lysine.. It participates in protein modification; protein ubiquitination. Functionally, component of the RNF20/40 E3 ubiquitin-protein ligase complex that mediates monoubiquitination of 'Lys-120' of histone H2B (H2BK120ub1). H2BK120ub1 gives a specific tag for epigenetic transcriptional activation and is also prerequisite for histone H3 'Lys-4' and 'Lys-79' methylation (H3K4me and H3K79me, respectively). It thereby plays a central role in histone code and gene regulation. The RNF20/40 complex forms a H2B ubiquitin ligase complex in cooperation with the E2 enzyme UBE2A or UBE2B; reports about the cooperation with UBE2E1/UBCH are contradictory. Required for transcriptional activation of Hox genes. Recruited to the MDM2 promoter, probably by being recruited by p53/TP53, and thereby acts as a transcriptional coactivator. Mediates the polyubiquitination of PA2G4 leading to its proteasome-mediated degradation. The protein is E3 ubiquitin-protein ligase BRE1A (RNF20) of Bos taurus (Bovine).